Consider the following 99-residue polypeptide: Large ribosomal subunit protein uL23 (99 aa).

The protein belongs to the universal ribosomal protein uL23 family. Part of the 50S ribosomal subunit. Contacts protein L29, and trigger factor when it is bound to the ribosome.

Its function is as follows. One of the early assembly proteins it binds 23S rRNA. One of the proteins that surrounds the polypeptide exit tunnel on the outside of the ribosome. Forms the main docking site for trigger factor binding to the ribosome. The chain is Large ribosomal subunit protein uL23 from Psychromonas ingrahamii (strain DSM 17664 / CCUG 51855 / 37).